A 336-amino-acid chain; its full sequence is Fructose-1,6-bisphosphatase class 1 (336 aa).

Glu-90, Asp-112, Leu-114, and Asp-115 together coordinate Mg(2+). Substrate-binding positions include 115-118, Asn-207, and Lys-273; that span reads DGSS. Glu-279 contributes to the Mg(2+) binding site.

Belongs to the FBPase class 1 family. In terms of assembly, homotetramer. It depends on Mg(2+) as a cofactor.

Its subcellular location is the cytoplasm. The catalysed reaction is beta-D-fructose 1,6-bisphosphate + H2O = beta-D-fructose 6-phosphate + phosphate. The protein operates within carbohydrate biosynthesis; gluconeogenesis. This Xanthomonas oryzae pv. oryzae (strain PXO99A) protein is Fructose-1,6-bisphosphatase class 1.